Here is a 171-residue protein sequence, read N- to C-terminus: Nucleoside-triphosphatase THEP1 (171 aa).

ATP is bound by residues Gly8–Ser15 and Val95–Gly102.

This sequence belongs to the THEP1 NTPase family.

It catalyses the reaction a ribonucleoside 5'-triphosphate + H2O = a ribonucleoside 5'-diphosphate + phosphate + H(+). Functionally, has nucleotide phosphatase activity towards ATP, GTP, CTP, TTP and UTP. May hydrolyze nucleoside diphosphates with lower efficiency. The protein is Nucleoside-triphosphatase THEP1 of Ignicoccus hospitalis (strain KIN4/I / DSM 18386 / JCM 14125).